A 150-amino-acid polypeptide reads, in one-letter code: 5-hydroxytryptamine receptor 1B (150 aa).

Topologically, residues 1–83 (VEARSRILKQ…AARERKATKT (83 aa)) are extracellular. Residues 27–40 (DSPGSTSSVTSINS) show a composition bias toward polar residues. Residues 27–50 (DSPGSTSSVTSINSRAPDLPSESG) form a disordered region. A helical transmembrane segment spans residues 84–105 (LGIILGAFIVCWLPFFIISLAM). At 106-115 (PICKDACWFH) the chain is on the cytoplasmic side. The chain crosses the membrane as a helical span at residues 116–138 (LAIFDFFTWLGYLNSLINPIIYT). An NPxxY motif; important for ligand-induced conformation changes and signaling motif is present at residues 133 to 137 (NPIIY). Topologically, residues 139–150 (MFNEDFKQAFHK) are extracellular.

This sequence belongs to the G-protein coupled receptor 1 family. As to quaternary structure, homodimer. Heterodimer with HTR1D. In terms of processing, phosphorylated. Desensitization of the receptor may be mediated by its phosphorylation. Post-translationally, palmitoylated.

It localises to the cell membrane. Its function is as follows. G-protein coupled receptor for 5-hydroxytryptamine (serotonin). Also functions as a receptor for ergot alkaloid derivatives, various anxiolytic and antidepressant drugs and other psychoactive substances, such as lysergic acid diethylamide (LSD). Ligand binding causes a conformation change that triggers signaling via guanine nucleotide-binding proteins (G proteins) and modulates the activity of downstream effectors, such as adenylate cyclase. HTR1B is coupled to G(i)/G(o) G alpha proteins and mediates inhibitory neurotransmission by inhibiting adenylate cyclase activity. Arrestin family members inhibit signaling via G proteins and mediate activation of alternative signaling pathways. Regulates the release of 5-hydroxytryptamine, dopamine and acetylcholine in the brain, and thereby affects neural activity, nociceptive processing, pain perception, mood and behavior. Besides, plays a role in vasoconstriction of cerebral arteries. The protein is 5-hydroxytryptamine receptor 1B (HTR1B) of Sus scrofa (Pig).